A 489-amino-acid polypeptide reads, in one-letter code: METENIHSFDVSLFSSCRVLVVGDMMIDEYLWGEVSRISPEAPVQVVEVKKTTSTLGGAGNVVNNLTALGAKVSVAGVMGGGKAGDLLNGKLTALGVNTEGLLVDQGRATTRKTRVIGANQQMLRIDRESKQEISEEQVQAIVRFAQNQIPQCDLVIASDYGKGVLTRSLMEELAKICKTAGKALIVDPKGMDYSKYKGATCITPNKKEASQASGVEIKDQASLERAAAKLLEIAGAEKILITLGKDGMALFSPGEEPFRVHAQARQVFDVSGAGDTVISVLGLSLAAGASYKTAAALANTAAGIVVAKVGTATVDQAELKAQLQDQPIAYQAKLKPLQELKSALENLRRQGKKIILTNGCFDLLHEGHINLLEQSRKLGDVLVVAVDDDESVRMVKGQGRPIIRERERVKIISAMTGVDFVTVFSTNQLDELIRAVKPDILTKGGNYKPDQVLGHEIVEELGGRIVLIPDASDVSSTRIIQDIRNGRG.

Residues 1 to 328 (METENIHSFD…ELKAQLQDQP (328 aa)) are ribokinase. 206 to 209 (NKKE) is a binding site for ATP. Aspartate 276 is a catalytic residue. Residues 357–489 (LTNGCFDLLH…IIQDIRNGRG (133 aa)) form a cytidylyltransferase region.

It in the N-terminal section; belongs to the carbohydrate kinase PfkB family. This sequence in the C-terminal section; belongs to the cytidylyltransferase family. In terms of assembly, homodimer.

The enzyme catalyses D-glycero-beta-D-manno-heptose 7-phosphate + ATP = D-glycero-beta-D-manno-heptose 1,7-bisphosphate + ADP + H(+). It carries out the reaction D-glycero-beta-D-manno-heptose 1-phosphate + ATP + H(+) = ADP-D-glycero-beta-D-manno-heptose + diphosphate. It functions in the pathway nucleotide-sugar biosynthesis; ADP-L-glycero-beta-D-manno-heptose biosynthesis; ADP-L-glycero-beta-D-manno-heptose from D-glycero-beta-D-manno-heptose 7-phosphate: step 1/4. It participates in nucleotide-sugar biosynthesis; ADP-L-glycero-beta-D-manno-heptose biosynthesis; ADP-L-glycero-beta-D-manno-heptose from D-glycero-beta-D-manno-heptose 7-phosphate: step 3/4. In terms of biological role, catalyzes the phosphorylation of D-glycero-D-manno-heptose 7-phosphate at the C-1 position to selectively form D-glycero-beta-D-manno-heptose-1,7-bisphosphate. Functionally, catalyzes the ADP transfer from ATP to D-glycero-beta-D-manno-heptose 1-phosphate, yielding ADP-D-glycero-beta-D-manno-heptose. The chain is Bifunctional protein HldE from Desulfatibacillum aliphaticivorans.